Here is a 24-residue protein sequence, read N- to C-terminus: Ascaphin-5 (24 aa).

Expressed by the skin glands.

It localises to the secreted. In terms of biological role, antimicrobial peptide. Synthetic peptide shows higher potency against Gram-negative bacteria than against Gram-positive bacteria. Has a very week hemolytic activity. This Ascaphus truei (Coastal tailed frog) protein is Ascaphin-5.